A 272-amino-acid chain; its full sequence is Formamidopyrimidine-DNA glycosylase (272 aa).

Residue proline 2 is the Schiff-base intermediate with DNA of the active site. The Proton donor role is filled by glutamate 3. The active-site Proton donor; for beta-elimination activity is the lysine 56. Histidine 89, arginine 108, and lysine 149 together coordinate DNA. An FPG-type zinc finger spans residues 234 to 268 (LAYGRAGEMCVNCETPLENLKLGQRASVFCPQCQP). Arginine 258 (proton donor; for delta-elimination activity) is an active-site residue.

This sequence belongs to the FPG family. Monomer. The cofactor is Zn(2+).

It carries out the reaction Hydrolysis of DNA containing ring-opened 7-methylguanine residues, releasing 2,6-diamino-4-hydroxy-5-(N-methyl)formamidopyrimidine.. It catalyses the reaction 2'-deoxyribonucleotide-(2'-deoxyribose 5'-phosphate)-2'-deoxyribonucleotide-DNA = a 3'-end 2'-deoxyribonucleotide-(2,3-dehydro-2,3-deoxyribose 5'-phosphate)-DNA + a 5'-end 5'-phospho-2'-deoxyribonucleoside-DNA + H(+). Involved in base excision repair of DNA damaged by oxidation or by mutagenic agents. Acts as a DNA glycosylase that recognizes and removes damaged bases. Has a preference for oxidized purines, such as 7,8-dihydro-8-oxoguanine (8-oxoG). Has AP (apurinic/apyrimidinic) lyase activity and introduces nicks in the DNA strand. Cleaves the DNA backbone by beta-delta elimination to generate a single-strand break at the site of the removed base with both 3'- and 5'-phosphates. The polypeptide is Formamidopyrimidine-DNA glycosylase (Acinetobacter baylyi (strain ATCC 33305 / BD413 / ADP1)).